The primary structure comprises 679 residues: uncharacterized protein (679 aa).

A run of 12 helical transmembrane segments spans residues 23-41 (YALRNTIAMCLALTFAYYL), 46-65 (PYWAMTSAAVVSFPTVGGVI), 72-90 (IAGSLLGATAALIIAGHTL), 94-113 (WLFLFSMAAWIGFCTWACAH), 120-142 (YAFQLSGYTAAIIAFPMVNIVEI), 157-179 (IVGILCGGMMMMILPSTSDGTAL), 362-381 (WSGVRTFCTLTVIGAWSIGA), 385-404 (SGPGALTLAAISCVLYSIVA), 411-433 (SLLMRTLVLLSLFSFVVKFGLMV), 438-455 (LWQFLLFLFPLFVTMQLL), 462-481 (LAGLWGQLIVFMGSFIAVTN), and 496-515 (AKIVGVAISWLAFAILRPGS).

This sequence belongs to the aromatic acid exporter ArAE (TC 2.A.85) family.

It localises to the cell membrane. This is an uncharacterized protein from Salmonella typhimurium (strain LT2 / SGSC1412 / ATCC 700720).